We begin with the raw amino-acid sequence, 448 residues long: Tubulin alpha chain (448 aa).

8 residues coordinate GTP: Gln12, Glu73, Ser142, Gly146, Thr147, Thr181, Asn208, and Asn230. Glu73 contacts Mg(2+). Residue Glu256 is part of the active site.

This sequence belongs to the tubulin family. In terms of assembly, dimer of alpha and beta chains. A typical microtubule is a hollow water-filled tube with an outer diameter of 25 nm and an inner diameter of 15 nM. Alpha-beta heterodimers associate head-to-tail to form protofilaments running lengthwise along the microtubule wall with the beta-tubulin subunit facing the microtubule plus end conferring a structural polarity. Microtubules usually have 13 protofilaments but different protofilament numbers can be found in some organisms and specialized cells. It depends on Mg(2+) as a cofactor.

It is found in the cytoplasm. It localises to the cytoskeleton. It catalyses the reaction GTP + H2O = GDP + phosphate + H(+). Tubulin is the major constituent of microtubules, a cylinder consisting of laterally associated linear protofilaments composed of alpha- and beta-tubulin heterodimers. Microtubules grow by the addition of GTP-tubulin dimers to the microtubule end, where a stabilizing cap forms. Below the cap, tubulin dimers are in GDP-bound state, owing to GTPase activity of alpha-tubulin. This is Tubulin alpha chain (TUB1) from Eremothecium gossypii (strain ATCC 10895 / CBS 109.51 / FGSC 9923 / NRRL Y-1056) (Yeast).